The sequence spans 203 residues: dITP/XTP pyrophosphatase (203 aa).

Residue 8–13 (TANKGK) coordinates substrate. Mg(2+)-binding residues include Glu41 and Asp70. The Proton acceptor role is filled by Asp70. Residues Ser71, 153–156 (FGYD), Lys176, and 181–182 (HR) each bind substrate.

This sequence belongs to the HAM1 NTPase family. As to quaternary structure, homodimer. The cofactor is Mg(2+).

It catalyses the reaction XTP + H2O = XMP + diphosphate + H(+). The enzyme catalyses dITP + H2O = dIMP + diphosphate + H(+). The catalysed reaction is ITP + H2O = IMP + diphosphate + H(+). Pyrophosphatase that catalyzes the hydrolysis of nucleoside triphosphates to their monophosphate derivatives, with a high preference for the non-canonical purine nucleotides XTP (xanthosine triphosphate), dITP (deoxyinosine triphosphate) and ITP. Seems to function as a house-cleaning enzyme that removes non-canonical purine nucleotides from the nucleotide pool, thus preventing their incorporation into DNA/RNA and avoiding chromosomal lesions. This Listeria innocua serovar 6a (strain ATCC BAA-680 / CLIP 11262) protein is dITP/XTP pyrophosphatase.